The following is a 98-amino-acid chain: MSAKAEHYDVIRKPIITEKATMTSENGAVVFEVAIDSNKPQIKEAVEALFGVKVKAVNTTITKGKVKRFRGQLGKRKDVKKAYVTLEAGNTIDVSTGL.

The protein belongs to the universal ribosomal protein uL23 family. Part of the 50S ribosomal subunit. Contacts protein L29, and trigger factor when it is bound to the ribosome.

Functionally, one of the early assembly proteins it binds 23S rRNA. One of the proteins that surrounds the polypeptide exit tunnel on the outside of the ribosome. Forms the main docking site for trigger factor binding to the ribosome. This chain is Large ribosomal subunit protein uL23, found in Roseobacter denitrificans (strain ATCC 33942 / OCh 114) (Erythrobacter sp. (strain OCh 114)).